Reading from the N-terminus, the 200-residue chain is Interleukin 17-like protein (200 aa).

A signal peptide spans M1–S26. N46 is a glycosylation site (N-linked (GlcNAc...) asparagine). Cystine bridges form between C122-C175 and C127-C177. N-linked (GlcNAc...) asparagine glycosylation is present at N192.

Belongs to the IL-17 family. Expressed in several tissues including hemocytes, gills, mantle, adductor muscle, labial palps, digestive glands and heart with highest levels in gills and lowest levels in adductor muscle and heart.

The protein localises to the secreted. The chain is Interleukin 17-like protein from Magallana gigas (Pacific oyster).